The primary structure comprises 325 residues: Protein SAR DEFICIENT 4 (325 aa).

The N-terminal 42 residues, 1–42, are a transit peptide targeting the chloroplast; that stretch reads MAALPVFIPAESFPSILSHETLINHFRTNLPKHSSTITSPVR.

The protein belongs to the ornithine cyclodeaminase/mu-crystallin family.

Its subcellular location is the plastid. It is found in the chloroplast. Involved in the biosynthesis of pipecolate (Pip), a metabolite that orchestrates defense amplification, positive regulation of salicylic acid (SA) biosynthesis, and priming to guarantee effective local resistance induction and the establishment of systemic acquired resistance (SAR). Converts delta-(1)-piperideine-2-carboxylate (P2C) to Pip. Mediates reduction of P2C and biosynthesis of Pip in systemic tissue and contributes to SAR establishment. Does not possess ornithine cyclodeaminase activity in vitro. This is Protein SAR DEFICIENT 4 from Arabidopsis thaliana (Mouse-ear cress).